Consider the following 87-residue polypeptide: Conotoxin QcMNCL-XIII0.1 (87 aa).

The first 18 residues, 1–18 (MNCLQLLLVLLLISTIAA), serve as a signal peptide directing secretion. Positions 19-34 (LHGDGRVPQRRGRNIR) are excised as a propeptide.

In terms of processing, contains 4 disulfide bonds. As to expression, expressed by the venom duct.

The protein resides in the secreted. May interact and inhibit Cav3.1/CACNA1G calcium channels. In a ex vivo model, shows ability to block nerve signal transduction. This is Conotoxin QcMNCL-XIII0.1 from Conus quercinus (Oak cone).